Here is a 100-residue protein sequence, read N- to C-terminus: Small ribosomal subunit protein uS14c (100 aa).

The protein belongs to the universal ribosomal protein uS14 family. As to quaternary structure, part of the 30S ribosomal subunit.

Its subcellular location is the plastid. The protein resides in the chloroplast. Its function is as follows. Binds 16S rRNA, required for the assembly of 30S particles. This Cycas taitungensis (Prince sago) protein is Small ribosomal subunit protein uS14c.